The sequence spans 298 residues: uncharacterized protein (298 aa).

Residues 2-229 (LTIDHVTKTF…FGKKNVTIHS (228 aa)) enclose the ABC transporter domain. An ATP-binding site is contributed by 34–41 (GANGAGKT).

This sequence belongs to the ABC transporter superfamily.

Its subcellular location is the cell membrane. This is an uncharacterized protein from Bacillus subtilis (strain 168).